A 484-amino-acid polypeptide reads, in one-letter code: uncharacterized protein (484 aa).

12 helical membrane-spanning segments follow: residues 19-39 (LSFG…MIFV), 78-98 (VNWG…WLIV), 111-131 (FFML…FIIL), 134-154 (IFAI…SNYL), 165-185 (FSPF…AGII), 199-219 (IVFL…IILG), 249-269 (TWYW…PFTF), 289-309 (ISVF…TIGL), 321-341 (ISTI…VFVL), 360-380 (LFLF…GVML), 398-418 (FGLI…ITSL), and 440-460 (LGAY…LALL).

It is found in the cell membrane. This is an uncharacterized protein from Mesomycoplasma hyopneumoniae (strain 232) (Mycoplasma hyopneumoniae).